Reading from the N-terminus, the 162-residue chain is G/U mismatch-specific DNA glycosylase (162 aa).

Belongs to the uracil-DNA glycosylase (UDG) superfamily. TDG/mug family. As to quaternary structure, binds DNA as a monomer.

It is found in the cytoplasm. It catalyses the reaction Specifically hydrolyzes mismatched double-stranded DNA and polynucleotides, releasing free uracil.. Its function is as follows. Excises ethenocytosine and uracil, which can arise by alkylation or deamination of cytosine, respectively, from the corresponding mispairs with guanine in ds-DNA. It is capable of hydrolyzing the carbon-nitrogen bond between the sugar-phosphate backbone of the DNA and the mispaired base. The complementary strand guanine functions in substrate recognition. Required for DNA damage lesion repair in stationary-phase cells. This is G/U mismatch-specific DNA glycosylase from Serratia proteamaculans (strain 568).